We begin with the raw amino-acid sequence, 735 residues long: 1,4-alpha-glucan branching enzyme GlgB 1 (735 aa).

Residue D418 is the Nucleophile of the active site. E471 functions as the Proton donor in the catalytic mechanism.

The protein belongs to the glycosyl hydrolase 13 family. GlgB subfamily. As to quaternary structure, monomer.

It carries out the reaction Transfers a segment of a (1-&gt;4)-alpha-D-glucan chain to a primary hydroxy group in a similar glucan chain.. It participates in glycan biosynthesis; glycogen biosynthesis. Its function is as follows. Catalyzes the formation of the alpha-1,6-glucosidic linkages in glycogen by scission of a 1,4-alpha-linked oligosaccharide from growing alpha-1,4-glucan chains and the subsequent attachment of the oligosaccharide to the alpha-1,6 position. The protein is 1,4-alpha-glucan branching enzyme GlgB 1 of Rhizobium johnstonii (strain DSM 114642 / LMG 32736 / 3841) (Rhizobium leguminosarum bv. viciae).